Here is a 233-residue protein sequence, read N- to C-terminus: Large ribosomal subunit protein eL6z (233 aa).

Positions 175-195 (EFFEAEKEEKKEIPQEKKEDQ) are disordered.

The protein belongs to the eukaryotic ribosomal protein eL6 family.

The sequence is that of Large ribosomal subunit protein eL6z (RPL6A) from Arabidopsis thaliana (Mouse-ear cress).